A 126-amino-acid polypeptide reads, in one-letter code: Glycine cleavage system H protein (126 aa).

In terms of domain architecture, Lipoyl-binding spans 20–102 (IGTIGITDYA…LGDGWFFKVR (83 aa)). Lysine 61 carries the N6-lipoyllysine modification.

It belongs to the GcvH family. In terms of assembly, the glycine cleavage system is composed of four proteins: P, T, L and H. (R)-lipoate serves as cofactor.

In terms of biological role, the glycine cleavage system catalyzes the degradation of glycine. The H protein shuttles the methylamine group of glycine from the P protein to the T protein. The chain is Glycine cleavage system H protein from Rhodospirillum rubrum (strain ATCC 11170 / ATH 1.1.1 / DSM 467 / LMG 4362 / NCIMB 8255 / S1).